The sequence spans 89 residues: Large ribosomal subunit protein uL29 (89 aa).

Belongs to the universal ribosomal protein uL29 family.

The chain is Large ribosomal subunit protein uL29 from Frankia alni (strain DSM 45986 / CECT 9034 / ACN14a).